The sequence spans 425 residues: High-affinity branched-chain amino acid transport system permease protein LivM (425 aa).

Transmembrane regions (helical) follow at residues 6-26 (IAMA…FMGV), 45-65 (WQWI…RPMF), 92-112 (FLMA…RGSV), 120-140 (IYII…LLVL), 145-165 (FYAI…LGFW), 167-187 (CLPL…FPVL), 191-211 (GDYL…LLLN), 260-280 (RVIF…FVIN), 311-331 (IKLT…TLFA), 353-373 (IVVL…VLLV), and 388-408 (LMLG…LLPM).

This sequence belongs to the binding-protein-dependent transport system permease family. LivHM subfamily.

It localises to the cell inner membrane. Its function is as follows. Part of the binding-protein-dependent transport system for branched-chain amino acids. Probably responsible for the translocation of the substrates across the membrane. The sequence is that of High-affinity branched-chain amino acid transport system permease protein LivM (livM) from Salmonella typhimurium (strain LT2 / SGSC1412 / ATCC 700720).